Here is a 257-residue protein sequence, read N- to C-terminus: 4-hydroxy-tetrahydrodipicolinate reductase (257 aa).

NAD(+) is bound at residue 7–12; sequence GCLGRM. Position 34 (R34) interacts with NADP(+). NAD(+)-binding positions include 96–98 and 117–120; these read GTT and SCNM. The Proton donor/acceptor role is filled by H149. H150 contributes to the (S)-2,3,4,5-tetrahydrodipicolinate binding site. K153 functions as the Proton donor in the catalytic mechanism. 159-160 contacts (S)-2,3,4,5-tetrahydrodipicolinate; that stretch reads GT.

The protein belongs to the DapB family.

Its subcellular location is the cytoplasm. The catalysed reaction is (S)-2,3,4,5-tetrahydrodipicolinate + NAD(+) + H2O = (2S,4S)-4-hydroxy-2,3,4,5-tetrahydrodipicolinate + NADH + H(+). It catalyses the reaction (S)-2,3,4,5-tetrahydrodipicolinate + NADP(+) + H2O = (2S,4S)-4-hydroxy-2,3,4,5-tetrahydrodipicolinate + NADPH + H(+). It participates in amino-acid biosynthesis; L-lysine biosynthesis via DAP pathway; (S)-tetrahydrodipicolinate from L-aspartate: step 4/4. Catalyzes the conversion of 4-hydroxy-tetrahydrodipicolinate (HTPA) to tetrahydrodipicolinate. This Anaplasma marginale (strain St. Maries) protein is 4-hydroxy-tetrahydrodipicolinate reductase.